Reading from the N-terminus, the 345-residue chain is G-protein coupled receptor family C group 5 member D (345 aa).

Residues 1–27 lie on the Extracellular side of the membrane; that stretch reads MYKDCIESTGDYFLLCDAEGPWGIILE. A helical membrane pass occupies residues 28–48; sequence SLAILGIVVTILLLLAFLFLM. Over 49 to 63 the chain is Cytoplasmic; the sequence is RKIQDCSQWNVLPTQ. A helical transmembrane segment spans residues 64-84; sequence LLFLLSVLGLFGLAFAFIIEL. Over 85-93 the chain is Extracellular; that stretch reads NQQTAPVRY. The chain crosses the membrane as a helical span at residues 94–114; it reads FLFGVLFALCFSCLLAHASNL. The Cytoplasmic portion of the chain corresponds to 115-123; the sequence is VKLVRGCVS. A helical transmembrane segment spans residues 124 to 144; it reads FSWTTILCIAIGCSLLQIIIA. Topologically, residues 145–167 are extracellular; that stretch reads TEYVTLIMTRGMMFVNMTPCQLN. Residues 168-188 traverse the membrane as a helical segment; sequence VDFVVLLVYVLFLMALTFFVS. Over 189–204 the chain is Cytoplasmic; that stretch reads KATFCGPCENWKQHGR. The helical transmembrane segment at 205 to 225 threads the bilayer; the sequence is LIFITVLFSIIIWVVWISMLL. Over 226 to 239 the chain is Extracellular; the sequence is RGNPQFQRQPQWDD. A helical transmembrane segment spans residues 240 to 260; that stretch reads PVVCIALVTNAWVFLLLYIVP. The Cytoplasmic portion of the chain corresponds to 261 to 345; sequence ELCILYRSCR…LSPQQDAGGV (85 aa).

The protein belongs to the G-protein coupled receptor 3 family. As to quaternary structure, homodimer. Widely expressed in the peripheral system. Expression pattern is high in pancreas, medium in kidney, small intestine, spleen and testis, low in lung, colon, leukocyte, prostate and thymus and not detectable in brain, heart, liver, placenta, skeletal muscle and ovary.

The protein localises to the cell membrane. Its function is as follows. G-protein coupled receptor involved in hard keratin expression and likely plays a role in the development of hair and nails. This Homo sapiens (Human) protein is G-protein coupled receptor family C group 5 member D (GPRC5D).